Consider the following 231-residue polypeptide: Large ribosomal subunit protein uL1 (231 aa).

It belongs to the universal ribosomal protein uL1 family. In terms of assembly, part of the 50S ribosomal subunit.

Its function is as follows. Binds directly to 23S rRNA. The L1 stalk is quite mobile in the ribosome, and is involved in E site tRNA release. In terms of biological role, protein L1 is also a translational repressor protein, it controls the translation of the L11 operon by binding to its mRNA. This Polaromonas sp. (strain JS666 / ATCC BAA-500) protein is Large ribosomal subunit protein uL1.